A 1481-amino-acid chain; its full sequence is Cystic fibrosis transmembrane conductance regulator (1481 aa).

Residues 1–77 are Cytoplasmic-facing; that stretch reads MQRSPLEKAS…KLINALRRCF (77 aa). Residues 78–98 traverse the membrane as a helical segment; sequence FWRFMFYGILLYLGEVTKAVQ. The region spanning 81–365 is the ABC transmembrane type-1 1 domain; that stretch reads FMFYGILLYL…WAVQTWYDSL (285 aa). Residues 99-122 are Extracellular-facing; it reads PLLLGRIIASYDPDNKEERSIAIY. Residues 123–146 form a helical membrane-spanning segment; the sequence is LGIGLCLLFIVRTLLLHPAIFGLH. Over 147–195 the chain is Cytoplasmic; sequence HIGMQMRIAMFSLIYKKTLKLSSRVLDKISIGQLVSLLSNNLNKFDEGL. The chain crosses the membrane as a helical span at residues 196-216; the sequence is ALAHFVWIVPLQVALLMGLIW. Topologically, residues 217 to 222 are extracellular; the sequence is ELLQAS. Residues 223–243 form a helical membrane-spanning segment; that stretch reads AFCGLGFLIVLALFQAGLGRM. Residues 244-298 lie on the Cytoplasmic side of the membrane; that stretch reads MMKYRDQRAGKINERLVITSEMIENIQSVKAYCWEEAMEKMIENLRQTELKLTRK. A helical membrane pass occupies residues 299–319; that stretch reads AAYVRYFNSSAFFFSGFFVVF. Residues 320-339 are Extracellular-facing; sequence LSVLPYALIKGIVLRKIFTT. A helical transmembrane segment spans residues 340 to 358; it reads ISFCIVLRMAVTRQFPWAV. The Cytoplasmic portion of the chain corresponds to 359–858; the sequence is QTWYDSLGAI…YLRYITVHKS (500 aa). ATP-binding positions include tryptophan 401, serine 434, 458–465, and glutamine 493; that span reads GSTGAGKT. The ABC transporter 1 domain occupies 423 to 646; it reads NDDDSLFFSN…RPDFSSKLMG (224 aa). Cysteine 524 is lipidated: S-palmitoyl cysteine. Serine 549 and serine 660 each carry phosphoserine. A disordered R region region spans residues 654-831; it reads SAERRNSILT…EEINEEDLKE (178 aa). Phosphoserine; by PKA is present on serine 670. Serine 686 carries the post-translational modification Phosphoserine. Residue lysine 688 forms a Glycyl lysine isopeptide (Lys-Gly) (interchain with G-Cter in ubiquitin) linkage. A phosphoserine mark is found at serine 700 and serine 712. Phosphothreonine is present on threonine 717. Residues serine 737, serine 753, serine 768, serine 790, serine 795, and serine 813 each carry the phosphoserine modification. The helical transmembrane segment at 859 to 879 threads the bilayer; it reads LIFVLIWCLVIFLAEVAASLV. The ABC transmembrane type-1 2 domain maps to 859-1155; the sequence is LIFVLIWCLV…AVNSSIDVDS (297 aa). At 880–918 the chain is on the extracellular side; that stretch reads VLWFLGNTPPQDKGNSTYSRNNSYAVIITRTSSYYVFYI. N-linked (GlcNAc...) asparagine glycans are attached at residues asparagine 894 and asparagine 900. Residues 919 to 939 form a discontinuously helical membrane-spanning segment; it reads YVGVADTLLAMGFFRGLPLVH. Residues 940 to 990 lie on the Cytoplasmic side of the membrane; the sequence is TLITVSKILHHKMLHSVLQAPMSTLNTLKAGGILNRFSKDIAILDDLLPLT. Residues 991–1011 form a helical membrane-spanning segment; it reads IFDFIQLLLIVIGAIAVVAVL. The Extracellular portion of the chain corresponds to 1012-1013; that stretch reads QP. The chain crosses the membrane as a helical span at residues 1014–1034; that stretch reads YIFVATVPVIVAFIMLRAYFL. The Cytoplasmic segment spans residues 1035-1095; the sequence is QTSQQLKQLE…TANWFLYLST (61 aa). A helical transmembrane segment spans residues 1096–1116; sequence LRWFQMRIEMIFVIFFIAVTF. At 1117 to 1130 the chain is on the extracellular side; it reads ISILTTGEGEGTVG. A helical membrane pass occupies residues 1131 to 1151; that stretch reads IILTLAMNIMSTLQWAVNSSI. Over 1152–1481 the chain is Cytoplasmic; sequence DVDSLMRSVS…TEEEVQDTRL (330 aa). Residues 1211 to 1444 form the ABC transporter 2 domain; it reads MTVKDLTAKY…RSLFRQAISP (234 aa). ATP contacts are provided by residues tyrosine 1220 and 1245-1252; that span reads GRTGSGKS. The interaction with GORASP2 stretch occupies residues 1387–1481; the sequence is RTLKQAFADC…TEEEVQDTRL (95 aa). Cysteine 1396 carries S-palmitoyl cysteine lipidation. Phosphoserine occurs at positions 1445 and 1457. Residues 1462–1481 are disordered; that stretch reads QPQIAALKEETEEEVQDTRL. Residues 1471-1481 show a composition bias toward acidic residues; the sequence is ETEEEVQDTRL. The PDZ-binding signature appears at 1479 to 1481; that stretch reads TRL.

Belongs to the ABC transporter superfamily. ABCC family. CFTR transporter (TC 3.A.1.202) subfamily. In terms of assembly, monomer; does not require oligomerization for channel activity. May form oligomers in the membrane. Interacts with SLC26A3, SLC26A6 and NHERF1. Interacts with SHANK2. Interacts with MYO6. Interacts (via C-terminus) with GOPC (via PDZ domain); this promotes CFTR internalization and thereby decreases channel activity. Interacts with SLC4A7 through NHERF1. Found in a complex with MYO5B and RAB11A. Interacts with ANO1. Interacts with SLC26A8. Interacts with AHCYL1; the interaction increases CFTR activity. Interacts with CSE1L. The core-glycosylated form interacts with GORASP2 (via PDZ GRASP-type 1 domain) in respone to ER stress. Interacts with MARCHF2; the interaction leads to CFTR ubiqtuitination and degradation. Interacts with ADGRG2. N-glycosylated. In terms of processing, phosphorylated; cAMP treatment promotes phosphorylation and activates the channel. Dephosphorylation decreases the ATPase activity (in vitro). Phosphorylation at PKA sites activates the channel. Phosphorylation at PKC sites enhances the response to phosphorylation by PKA. Phosphorylated by AMPK; this inhibits channel activity. Post-translationally, ubiquitinated, leading to its degradation in the lysosome. Deubiquitination by USP10 in early endosomes enhances its endocytic recycling to the cell membrane. Ubiquitinated by RNF185 during ER stress. Ubiquitinated by MARCHF2.

It localises to the apical cell membrane. The protein resides in the early endosome membrane. Its subcellular location is the cell membrane. It is found in the recycling endosome membrane. The protein localises to the endoplasmic reticulum membrane. It localises to the nucleus. It carries out the reaction ATP + H2O + closed Cl(-) channel = ADP + phosphate + open Cl(-) channel.. The enzyme catalyses chloride(in) = chloride(out). It catalyses the reaction hydrogencarbonate(in) = hydrogencarbonate(out). The catalysed reaction is ATP + H2O = ADP + phosphate + H(+). Epithelial ion channel that plays an important role in the regulation of epithelial ion and water transport and fluid homeostasis. Mediates the transport of chloride ions across the cell membrane. Possesses an intrinsic ATPase activity and utilizes ATP to gate its channel; the passive flow of anions through the channel is gated by cycles of ATP binding and hydrolysis by the ATP-binding domains. The ion channel is also permeable to HCO(3)(-); selectivity depends on the extracellular chloride concentration. Exerts its function also by modulating the activity of other ion channels and transporters. Contributes to the regulation of the pH and the ion content of the epithelial fluid layer. Modulates the activity of the epithelial sodium channel (ENaC) complex, in part by regulating the cell surface expression of the ENaC complex. May regulate bicarbonate secretion and salvage in epithelial cells by regulating the transporter SLC4A7. Can inhibit the chloride channel activity of ANO1. Plays a role in the chloride and bicarbonate homeostasis during sperm epididymal maturation and capacitation. The protein is Cystic fibrosis transmembrane conductance regulator of Chlorocebus aethiops (Green monkey).